The sequence spans 422 residues: MNQVELLSPAGNLKKLKIALNYGADAVYGGVSHFSLRNRAGKEFTLETFKEGIDYAHALNKKVYATINGFPFNSQLKLLEEHIDKMAELEPDAFIIAAPGVVKLALKIAPHIPIHLSTQANVLNLLDAQVFYDLGVKRIVCARELSLNDAIEIKKALPNLELEIFVHGSMCFAFSGRCLISALQKGRVPNRGSCANDCRFDYEYYVKNPDNGVMMRLVEEEGVGTHIFNAKDLNLSGHIAEILSSNAISALKIEGRTKSSYYAAQTTRIYRLAVDDFYHNTLKPSFYASELNTLKNRGFTDGYLMRRPFERLDTQNHQTAISEGDFQVNGEITEDGRFFACKFTTTTNTAYEIIAPKNAAITPIVNEIGKIYTFEKRSYLVLYKILLENNTELETIHSGNVNLVRLPAPLPAFSFLRTQVRV.

The first 58 residues, 1 to 58 (MNQVELLSPAGNLKKLKIALNYGADAVYGGVSHFSLRNRAGKEFTLETFKEGIDYAHA), serve as a signal peptide directing secretion.

The protein belongs to the peptidase U32 family.

In terms of biological role, involved in prephenate-dependent formation of 5-hydroxyuridine (ho5U) modification at position 34 in tRNAs, the first step in 5-carboxymethoxyuridine (cmo5U) biosynthesis. This is tRNA hydroxylation protein P from Helicobacter pylori (strain ATCC 700392 / 26695) (Campylobacter pylori).